Consider the following 117-residue polypeptide: MNKEIIEVFDNTYPDRDYTIEIINPEFTSVCPKTGLPDFGTITVNYVPDKSCIELKSLKYYFLEFRNAGIFYENITNRILDDLVEACQPRRMTVKTEWNARGGITETVTVSYSKSKE.

Cys-31 functions as the Thioimide intermediate in the catalytic mechanism. The active-site Proton donor is Asp-38. Substrate is bound by residues 53–55 (IEL) and 72–73 (YE).

The protein belongs to the GTP cyclohydrolase I family. QueF type 1 subfamily.

Its subcellular location is the cytoplasm. The catalysed reaction is 7-aminomethyl-7-carbaguanine + 2 NADP(+) = 7-cyano-7-deazaguanine + 2 NADPH + 3 H(+). The protein operates within tRNA modification; tRNA-queuosine biosynthesis. Catalyzes the NADPH-dependent reduction of 7-cyano-7-deazaguanine (preQ0) to 7-aminomethyl-7-deazaguanine (preQ1). In Chlorobaculum tepidum (strain ATCC 49652 / DSM 12025 / NBRC 103806 / TLS) (Chlorobium tepidum), this protein is NADPH-dependent 7-cyano-7-deazaguanine reductase.